Reading from the N-terminus, the 79-residue chain is Sec-independent protein translocase protein TatA (79 aa).

The chain crosses the membrane as a helical span at residues 1 to 21 (MGGISIWQLLIILVIVVLLFG). The disordered stretch occupies residues 45–79 (EEEKDADFEQKKQVEEKSAAEPVSTETQSDVKEKS). The segment covering 51–63 (DFEQKKQVEEKSA) has biased composition (basic and acidic residues).

The protein belongs to the TatA/E family. The Tat system comprises two distinct complexes: a TatABC complex, containing multiple copies of TatA, TatB and TatC subunits, and a separate TatA complex, containing only TatA subunits. Substrates initially bind to the TatABC complex, which probably triggers association of the separate TatA complex to form the active translocon.

The protein resides in the cell inner membrane. Its function is as follows. Part of the twin-arginine translocation (Tat) system that transports large folded proteins containing a characteristic twin-arginine motif in their signal peptide across membranes. TatA could form the protein-conducting channel of the Tat system. The chain is Sec-independent protein translocase protein TatA from Alteromonas mediterranea (strain DSM 17117 / CIP 110805 / LMG 28347 / Deep ecotype).